We begin with the raw amino-acid sequence, 414 residues long: Putative polyketide beta-ketoacyl synthase 2 (414 aa).

The region spanning 4 to 407 (PRRAVVTGLG…GNNSALVLRR (404 aa)) is the Ketosynthase family 3 (KS3) domain.

This sequence belongs to the thiolase-like superfamily. Beta-ketoacyl-ACP synthases family.

Functionally, involved in developmentally regulated synthesis of a compound biosynthetically related to polyketide antibiotics which is essential for spore color in Streptomyces halstedii. This chain is Putative polyketide beta-ketoacyl synthase 2 (sch2), found in Streptomyces halstedii.